Here is a 274-residue protein sequence, read N- to C-terminus: MTNVFTIDAFREEVKKKYEPVTIGISEDVTVELKPLLKLGQKAREAVVEAVKEVEDIPDIDEDDEEAEELVDEYSLRICEIVAKVFRLIATKPKKLIAALDEEEDPRIRAELYATVLRTWMVETQLGESRALAELIDKFGGAILSDLSEYHGVDLRDLFRDEDPLSPRYVLNLVIHLPKTGAFYAERRGGQQYRGWDEDRYALADIYDAVQAGNHILLMANRDPKKPKPKAPKAYPRPDDFEKTTPKPGSFAAMVVAAKKAAREKREREEANAE.

Residues 221–250 (NRDPKKPKPKAPKAYPRPDDFEKTTPKPGS) form a disordered region. Residues 236-245 (PRPDDFEKTT) are compositionally biased toward basic and acidic residues.

This sequence belongs to the L5likevirus tail assembly protein family. In terms of assembly, interacts with tail assembly protein Gp24 and tape measure protein.

Its function is as follows. Promotes tail assembly by creating a scaffold for the tail tube proteins. The tail assembly proteins Gp24 and Gp25 would wrap the linear tape measure protein to create a tail assembly scaffold. It would allow polymerization of tail tube protein during which Gp24 and Gp25 are released and therefore are absent from the mature virion. The tail assembly protein Gp25 is produced by a rare -1 ribosomal frameshift. The ratio Gp24/Gp25 is important for proper tail assembly. The protein is Tail assembly protein Gp25 (25) of Mycobacterium phage D29 (Mycobacteriophage D29).